Consider the following 31-residue polypeptide: Cyclotide cter-E (31 aa).

Positions 1–31 (GIPCAESCVWIPCTVTALLGCSCKDKVCYLD) form a cross-link, cyclopeptide (Gly-Asp). 3 disulfide bridges follow: Cys4-Cys21, Cys8-Cys23, and Cys13-Cys28.

Post-translationally, contains 3 disulfide bonds. In terms of processing, this is a cyclic peptide.

In terms of biological role, probably participates in a plant defense mechanism. This Clitoria ternatea (Butterfly pea) protein is Cyclotide cter-E.